The sequence spans 183 residues: Ankyrin repeat domain-containing protein 39 (183 aa).

ANK repeat units follow at residues Asp30–Gln59, Ala63–Ala92, Gly96–Val125, and Asp129–Ala158. Ser153 carries the phosphoserine modification.

It belongs to the ANKRD39 family.

The polypeptide is Ankyrin repeat domain-containing protein 39 (ANKRD39) (Homo sapiens (Human)).